We begin with the raw amino-acid sequence, 46 residues long: LNLGVGAYREYLPIEGLAAFNKVATVQGLSGTGSLRQALYDSISSK.

This sequence belongs to the class-I pyridoxal-phosphate-dependent aminotransferase family. Homodimer. It depends on pyridoxal 5'-phosphate as a cofactor.

The enzyme catalyses L-aspartate + 2-oxoglutarate = oxaloacetate + L-glutamate. Functionally, important for the metabolism of amino acids and Krebs-cycle related organic acids. In plants, it is involved in nitrogen metabolism and in aspects of carbon and energy metabolism. The polypeptide is Aspartate aminotransferase 1 (Pseudotsuga menziesii (Douglas-fir)).